Consider the following 246-residue polypeptide: Pyridoxine 5'-phosphate synthase (246 aa).

Asn10 serves as a coordination point for 3-amino-2-oxopropyl phosphate. Residue 12 to 13 (DH) coordinates 1-deoxy-D-xylulose 5-phosphate. Residue Arg21 coordinates 3-amino-2-oxopropyl phosphate. Catalysis depends on His46, which acts as the Proton acceptor. 1-deoxy-D-xylulose 5-phosphate contacts are provided by Arg48 and His53. Residue Glu73 is the Proton acceptor of the active site. Thr103 is a binding site for 1-deoxy-D-xylulose 5-phosphate. The active-site Proton donor is His193. 3-amino-2-oxopropyl phosphate is bound by residues Gly194 and 215 to 216 (GH).

This sequence belongs to the PNP synthase family. Homooctamer; tetramer of dimers.

The protein localises to the cytoplasm. It catalyses the reaction 3-amino-2-oxopropyl phosphate + 1-deoxy-D-xylulose 5-phosphate = pyridoxine 5'-phosphate + phosphate + 2 H2O + H(+). It functions in the pathway cofactor biosynthesis; pyridoxine 5'-phosphate biosynthesis; pyridoxine 5'-phosphate from D-erythrose 4-phosphate: step 5/5. Its function is as follows. Catalyzes the complicated ring closure reaction between the two acyclic compounds 1-deoxy-D-xylulose-5-phosphate (DXP) and 3-amino-2-oxopropyl phosphate (1-amino-acetone-3-phosphate or AAP) to form pyridoxine 5'-phosphate (PNP) and inorganic phosphate. The chain is Pyridoxine 5'-phosphate synthase from Rhodopirellula baltica (strain DSM 10527 / NCIMB 13988 / SH1).